We begin with the raw amino-acid sequence, 431 residues long: Dihydroorotase (431 aa).

Zn(2+) is bound by residues His-59 and His-61. Substrate is bound by residues 61 to 63 (HLR) and Asn-93. Positions 151, 178, 231, and 304 each coordinate Zn(2+). Asp-304 is a catalytic residue. Residues His-308 and 322 to 323 (FG) contribute to the substrate site.

The protein belongs to the metallo-dependent hydrolases superfamily. DHOase family. Class I DHOase subfamily. The cofactor is Zn(2+).

It catalyses the reaction (S)-dihydroorotate + H2O = N-carbamoyl-L-aspartate + H(+). The protein operates within pyrimidine metabolism; UMP biosynthesis via de novo pathway; (S)-dihydroorotate from bicarbonate: step 3/3. Functionally, catalyzes the reversible cyclization of carbamoyl aspartate to dihydroorotate. The protein is Dihydroorotase of Caldanaerobacter subterraneus subsp. tengcongensis (strain DSM 15242 / JCM 11007 / NBRC 100824 / MB4) (Thermoanaerobacter tengcongensis).